A 78-amino-acid chain; its full sequence is Acyl carrier protein (78 aa).

The Carrier domain maps to 2–77; that stretch reads SDIAERVKKI…DAIKFLEKNA (76 aa). Serine 37 is modified (O-(pantetheine 4'-phosphoryl)serine).

It belongs to the acyl carrier protein (ACP) family. 4'-phosphopantetheine is transferred from CoA to a specific serine of apo-ACP by AcpS. This modification is essential for activity because fatty acids are bound in thioester linkage to the sulfhydryl of the prosthetic group.

The protein resides in the cytoplasm. The protein operates within lipid metabolism; fatty acid biosynthesis. Its function is as follows. Carrier of the growing fatty acid chain in fatty acid biosynthesis. This chain is Acyl carrier protein, found in Azorhizobium caulinodans (strain ATCC 43989 / DSM 5975 / JCM 20966 / LMG 6465 / NBRC 14845 / NCIMB 13405 / ORS 571).